A 61-amino-acid polypeptide reads, in one-letter code: MAVPKSKKSKSRTRMRRSHDRLAMNTYIEDATSGELRRPHHIDLKTGMYRGKQILEPTDDI.

Belongs to the bacterial ribosomal protein bL32 family.

This chain is Large ribosomal subunit protein bL32, found in Hyphomonas neptunium (strain ATCC 15444).